A 138-amino-acid chain; its full sequence is Ribosome maturation factor RimP (138 aa).

Belongs to the RimP family.

It localises to the cytoplasm. Its function is as follows. Required for maturation of 30S ribosomal subunits. The chain is Ribosome maturation factor RimP from Campylobacter curvus (strain 525.92).